Consider the following 360-residue polypeptide: Phospho-N-acetylmuramoyl-pentapeptide-transferase (360 aa).

The next 10 helical transmembrane spans lie at 27 to 47 (IVSL…MIAW), 73 to 93 (TMGG…WANL), 94 to 114 (SNPY…VGFV), 132 to 152 (WKYF…YAIG), 168 to 188 (VMPQ…VGTS), 199 to 219 (GLAI…AWAT), 236 to 256 (ASEL…FLWF), 263 to 283 (VFMG…IAVL), 288 to 308 (FLLV…ILQV), and 338 to 358 (VIVR…ATLK).

The protein belongs to the glycosyltransferase 4 family. MraY subfamily. Requires Mg(2+) as cofactor.

It is found in the cell inner membrane. The enzyme catalyses UDP-N-acetyl-alpha-D-muramoyl-L-alanyl-gamma-D-glutamyl-meso-2,6-diaminopimeloyl-D-alanyl-D-alanine + di-trans,octa-cis-undecaprenyl phosphate = di-trans,octa-cis-undecaprenyl diphospho-N-acetyl-alpha-D-muramoyl-L-alanyl-D-glutamyl-meso-2,6-diaminopimeloyl-D-alanyl-D-alanine + UMP. It participates in cell wall biogenesis; peptidoglycan biosynthesis. Catalyzes the initial step of the lipid cycle reactions in the biosynthesis of the cell wall peptidoglycan: transfers peptidoglycan precursor phospho-MurNAc-pentapeptide from UDP-MurNAc-pentapeptide onto the lipid carrier undecaprenyl phosphate, yielding undecaprenyl-pyrophosphoryl-MurNAc-pentapeptide, known as lipid I. The sequence is that of Phospho-N-acetylmuramoyl-pentapeptide-transferase from Pectobacterium carotovorum subsp. carotovorum (strain PC1).